A 222-amino-acid chain; its full sequence is Hexitol phosphatase B (222 aa).

The active-site Nucleophile is aspartate 13. Residues aspartate 13 and aspartate 15 each coordinate a divalent metal cation. Substrate is bound by residues 13–15 (DMD), 115–116 (SA), and lysine 148. Catalysis depends on aspartate 15, which acts as the Proton donor. Aspartate 173 contributes to the a divalent metal cation binding site.

It belongs to the HAD-like hydrolase superfamily. CbbY/CbbZ/Gph/YieH family. It depends on Mg(2+) as a cofactor. Requires Mn(2+) as cofactor. Co(2+) is required as a cofactor. The cofactor is Zn(2+).

The catalysed reaction is sugar phosphate + H2O = sugar + phosphate.. The enzyme catalyses 2-deoxy-D-glucose 6-phosphate + H2O = 2-deoxy-D-glucose + phosphate. It catalyses the reaction D-mannitol 1-phosphate + H2O = D-mannitol + phosphate. It carries out the reaction D-sorbitol 6-phosphate + H2O = D-sorbitol + phosphate. Functionally, sugar-phosphate phosphohydrolase that catalyzes the dephosphorylation of D-mannitol 1-phosphate and D-sorbitol 6-phosphate. Also catalyzes the dephosphorylation of 2-deoxyglucose 6-phosphate (2dGlu6P); this is a biologically important activity in vivo since it contributes to the elimination of this toxic compound and plays an important role in the resistance of E.coli to 2-deoxyglucose. To a lesser extent, is also able to dephosphorylate mannose 6-phosphate (Man6P), erythrose-4-phosphate, 2-deoxyribose-5-phosphate (2dRib5P), ribose-5-phosphate (Rib5P) and glucose-6-phosphate (Glu6P) in vitro. This is Hexitol phosphatase B from Escherichia coli (strain K12).